A 68-amino-acid chain; its full sequence is Ribosome modulation factor (68 aa).

This sequence belongs to the ribosome modulation factor family.

It is found in the cytoplasm. In terms of biological role, during stationary phase, converts 70S ribosomes to an inactive dimeric form (100S ribosomes). The sequence is that of Ribosome modulation factor from Alcanivorax borkumensis (strain ATCC 700651 / DSM 11573 / NCIMB 13689 / SK2).